Consider the following 87-residue polypeptide: MAKEEVIEMEGVVNEVLPQTRFRVTLDNGFEITAYASGKMRKHRIRILAGDKVTVEMSPYDLTKGRINFRHKDAHQAPRPTVARRYN.

The 72-residue stretch at 1–72 (MAKEEVIEME…TKGRINFRHK (72 aa)) folds into the S1-like domain.

The protein belongs to the IF-1 family. In terms of assembly, component of the 30S ribosomal translation pre-initiation complex which assembles on the 30S ribosome in the order IF-2 and IF-3, IF-1 and N-formylmethionyl-tRNA(fMet); mRNA recruitment can occur at any time during PIC assembly.

It is found in the cytoplasm. Its function is as follows. One of the essential components for the initiation of protein synthesis. Stabilizes the binding of IF-2 and IF-3 on the 30S subunit to which N-formylmethionyl-tRNA(fMet) subsequently binds. Helps modulate mRNA selection, yielding the 30S pre-initiation complex (PIC). Upon addition of the 50S ribosomal subunit IF-1, IF-2 and IF-3 are released leaving the mature 70S translation initiation complex. The polypeptide is Translation initiation factor IF-1 2 (Thiobacillus denitrificans (strain ATCC 25259 / T1)).